A 187-amino-acid chain; its full sequence is Peptidoglycan-recognition protein 2 (187 aa).

The N-terminal stretch at methionine 1–alanine 19 is a signal peptide. 2 disulfide bridges follow: cysteine 21–cysteine 144 and cysteine 58–cysteine 64. One can recognise an N-acetylmuramoyl-L-alanine amidase domain in the interval lysine 43–glycine 170.

The protein belongs to the N-acetylmuramoyl-L-alanine amidase 2 family. As to expression, localizes to plasma (at protein level).

The protein localises to the secreted. Peptidoglycan-recognition protein probably involved in innate immunity by binding to peptidoglycans (PGN) of bacteria and activating the prophenoloxidase (proPO) cascade immune response. Binds to 1,3-beta-D-glucan and PGN. The protein is Peptidoglycan-recognition protein 2 (PGRP-2) of Holotrichia diomphalia (Korean black chafer).